Here is a 616-residue protein sequence, read N- to C-terminus: GDP-Man:Man(3)GlcNAc(2)-PP-Dol alpha-1,2-mannosyltransferase (616 aa).

Residue M1 is a topological domain, lumenal. A helical membrane pass occupies residues 2 to 21; sequence GYLVVIGVIACVAYGILQVV. Residues 22–199 lie on the Cytoplasmic side of the membrane; the sequence is STVLPRLLLV…RLIDGDYWKR (178 aa). The segment at residues 200 to 220 is an intramembrane region (helical); it reads FTLIGQLFGSMVLSWEAMFEL. At 221 to 460 the chain is on the cytoplasmic side; it reads SPDVWIDTIG…FGLNAMWNEH (240 aa). The helical intramembrane region spans 461 to 481; the sequence is FGIGVVEYMSRGVIPLCHASA. At 482–616 the chain is on the cytoplasmic side; the sequence is GPLLDIVTNW…ERRSGIEKVY (135 aa).

The protein belongs to the glycosyltransferase group 1 family.

The protein resides in the endoplasmic reticulum membrane. It carries out the reaction an alpha-D-Man-(1-&gt;3)-[alpha-D-Man-(1-&gt;6)]-beta-D-Man-(1-&gt;4)-beta-D-GlcNAc-(1-&gt;4)-alpha-D-GlcNAc-diphospho-di-trans,poly-cis-dolichol + 2 GDP-alpha-D-mannose = an alpha-D-Man-(1-&gt;2)-alpha-D-Man-(1-&gt;2)-alpha-D-Man-(1-&gt;3)-[alpha-D-Man-(1-&gt;6)]-beta-D-Man-(1-&gt;4)-beta-D-GlcNAc-(1-&gt;4)-alpha-D-GlcNAc-diphospho-di-trans,poly-cis-dolichol + 2 GDP + 2 H(+). Its pathway is protein modification; protein glycosylation. GDP-Man:Man(3)GlcNAc(2)-PP-Dol alpha-1,2-mannosyltransferase that operates in the biosynthetic pathway of dolichol-linked oligosaccharides, the glycan precursors employed in protein asparagine (N)-glycosylation. The assembly of dolichol-linked oligosaccharides begins on the cytosolic side of the endoplasmic reticulum membrane and finishes in its lumen. The sequential addition of sugars to dolichol pyrophosphate produces dolichol-linked oligosaccharides containing fourteen sugars, including two GlcNAcs, nine mannoses and three glucoses. Once assembled, the oligosaccharide is transferred from the lipid to nascent proteins by oligosaccharyltransferases. Catalyzes, on the cytoplasmic face of the endoplasmic reticulum, the addition of the fourth and fifth mannose residues to the dolichol-linked oligosaccharide chain, to produce Man(5)GlcNAc(2)-PP-dolichol core oligosaccharide. In Debaryomyces hansenii (strain ATCC 36239 / CBS 767 / BCRC 21394 / JCM 1990 / NBRC 0083 / IGC 2968) (Yeast), this protein is GDP-Man:Man(3)GlcNAc(2)-PP-Dol alpha-1,2-mannosyltransferase (ALG11).